A 1188-amino-acid chain; its full sequence is Adenomatous polyposis coli protein-related protein 1 (1188 aa).

A disordered region spans residues 1–50 (MSSSSSDENETTIHRTGSNTGGSGIYSQPRAGSSKRTSNVRHDVSDVDDE). The interval 1–486 (MSSSSSDENE…LSLRATRASP (486 aa)) is required for interaction with bar-1 and hmp-2. One copy of the ARM repeat lies at 314-358 (NCLKVLASLLSPDARFTSLVDSATGILKYVSQYLANTSTHLELRS). Over residues 579 to 588 (IQQQQQMQKA) the composition is skewed to low complexity. Disordered stretches follow at residues 579–624 (IQQQ…SMNP), 670–702 (TESE…DGAT), 726–751 (TPNG…GPSL), 778–952 (QSEM…TMRF), 1003–1092 (CSMI…LKDK), and 1157–1181 (YQKP…PNPK). Residues 600–1188 (DLDIPTSTVM…NPKQMLVTIV (589 aa)) are required for interaction with pry-1. Polar residues-rich tracts occupy residues 604-624 (PTST…SMNP) and 677-701 (LTSQ…SDGA). Composition is skewed to polar residues over residues 778 to 788 (QSEMPTSSSTP) and 800 to 811 (FSPTQKTTSSPA). 2 stretches are compositionally biased toward basic and acidic residues: residues 832 to 843 (RRQDASDADRLL) and 871 to 900 (EPER…DHNG). Composition is skewed to polar residues over residues 909-929 (WSPQ…SSED), 937-946 (EPNSSTSGAA), 1014-1039 (QRNE…SASS), and 1164-1180 (GRNN…TPNP).

This sequence belongs to the adenomatous polyposis coli (APC) family. Interacts (via N-terminus) with bar-1 and hmp-2; the interaction with hmp-2 is relatively weak. Interacts (via C-terminus) with pry-1 (via N-terminus). Probably associates with bar-1, gsk-3, pry-1 in a complex. In terms of tissue distribution, during the L1 stage, expressed in vulval precursor cells (P3-8.p), seam cells and excretory cells.

The protein resides in the cell junction. The protein localises to the adherens junction. It is found in the cytoplasm. Its subcellular location is the nucleus. In terms of biological role, has a role in endoderm cell specification and pharyngeal development. Required for the migration of epithelial cells, organization of the anterior seam cells and ceh-13 expression during embryo morphogenesis. Prevents hyperactivation of the Wnt signaling pathway during endoderm development, probably by preventing hmp-2 nuclear translocation. During larval development, apr-1 is required for expression of lin-39 in P3-8.p. Shown to negatively regulate Wnt signaling in vulval precursor cells. Has a role in cell division by establishing the polarity of the mother cell which forms the asymmetries of the daughter nuclei. During the L4 larval stage, it is required for the asymmetric division and self-renewal of seam cells. Thought to regulate export of wrm-1 from the nucleus possibly as part of a complex involving pry-1. The sequence is that of Adenomatous polyposis coli protein-related protein 1 from Caenorhabditis elegans.